Reading from the N-terminus, the 129-residue chain is Large ribosomal subunit protein bL17 (129 aa).

Belongs to the bacterial ribosomal protein bL17 family. Part of the 50S ribosomal subunit. Contacts protein L32.

The chain is Large ribosomal subunit protein bL17 from Pseudomonas aeruginosa (strain UCBPP-PA14).